A 1319-amino-acid polypeptide reads, in one-letter code: DNA-directed RNA polymerase subunit beta' (1319 aa).

Zn(2+) contacts are provided by Cys-60, Cys-62, Cys-75, and Cys-78. Residues Asp-535, Asp-537, and Asp-539 each contribute to the Mg(2+) site. Zn(2+)-binding residues include Cys-890, Cys-971, Cys-978, and Cys-981.

This sequence belongs to the RNA polymerase beta' chain family. The RNAP catalytic core consists of 2 alpha, 1 beta, 1 beta' and 1 omega subunit. When a sigma factor is associated with the core the holoenzyme is formed, which can initiate transcription. Mg(2+) serves as cofactor. It depends on Zn(2+) as a cofactor.

The catalysed reaction is RNA(n) + a ribonucleoside 5'-triphosphate = RNA(n+1) + diphosphate. Functionally, DNA-dependent RNA polymerase catalyzes the transcription of DNA into RNA using the four ribonucleoside triphosphates as substrates. The protein is DNA-directed RNA polymerase subunit beta' of Mycobacteroides abscessus (strain ATCC 19977 / DSM 44196 / CCUG 20993 / CIP 104536 / JCM 13569 / NCTC 13031 / TMC 1543 / L948) (Mycobacterium abscessus).